Consider the following 434-residue polypeptide: 3-ketoacyl-CoA thiolase A, peroxisomal (434 aa).

The transit peptide at 1–36 (MSESVGRTSAMHRLQVVLGHLAGRPESSSALQAAPC) directs the protein to the peroxisome. Positions 11–36 (MHRLQVVLGHLAGRPESSSALQAAPC) are PTS2-type peroxisomal targeting signal. Cys-133 acts as the Acyl-thioester intermediate in catalysis. Lys-183 and Lys-244 each carry N6-acetyllysine. Catalysis depends on proton acceptor residues His-387 and Cys-418.

The protein belongs to the thiolase-like superfamily. Thiolase family. As to quaternary structure, homodimer. Interacts (via PTS2-type peroxisomal targeting signal region) with PEX7; leading to its translocation into peroxisomes.

The protein localises to the peroxisome. The enzyme catalyses an acyl-CoA + acetyl-CoA = a 3-oxoacyl-CoA + CoA. The catalysed reaction is 2 acetyl-CoA = acetoacetyl-CoA + CoA. It carries out the reaction tetradecanoyl-CoA + acetyl-CoA = 3-oxohexadecanoyl-CoA + CoA. It catalyses the reaction hexanoyl-CoA + acetyl-CoA = 3-oxooctanoyl-CoA + CoA. The enzyme catalyses 3-oxohexadecanedioyl-CoA + CoA = tetradecanedioyl-CoA + acetyl-CoA. The catalysed reaction is 3-oxo-(6Z,9Z,12Z,15Z,18Z,21Z)-tetracosahexaenoyl-CoA + CoA = (4Z,7Z,10Z,13Z,16Z,19Z)-docosahexaenoyl-CoA + acetyl-CoA. It participates in lipid metabolism; peroxisomal fatty acid beta-oxidation. Its function is as follows. Responsible for the thiolytic cleavage of straight chain 3-keto fatty acyl-CoAs (3-oxoacyl-CoAs). Plays an important role in fatty acid peroxisomal beta-oxidation. Catalyzes the cleavage of short, medium, long, and very long straight chain 3-oxoacyl-CoAs. Medium chain straight 3-oxoacyl-CoAs are preferred substrates. The sequence is that of 3-ketoacyl-CoA thiolase A, peroxisomal from Rattus norvegicus (Rat).